A 215-amino-acid chain; its full sequence is Small ribosomal subunit protein eS1 (215 aa).

The interval 195-215 is disordered; that stretch reads SGMQEPQKNEPAPGGEAIAQN.

It belongs to the eukaryotic ribosomal protein eS1 family.

The chain is Small ribosomal subunit protein eS1 from Thermoplasma acidophilum (strain ATCC 25905 / DSM 1728 / JCM 9062 / NBRC 15155 / AMRC-C165).